Consider the following 190-residue polypeptide: Nuclear transcription factor Y subunit B-2 (190 aa).

The disordered stretch occupies residues 1-30 (MGDSDRDSGGGQNGNNQNGQSSLSPREQDR). A DNA-binding region spans residues 32–38 (LPIANVS). The segment at 59–70 (MQECVSEFISFV) is subunit association domain (SAD). The tract at residues 168–190 (HMYGATGGGSDSGGGAASGRTRT) is disordered. Residues 172–184 (ATGGGSDSGGGAA) are compositionally biased toward gly residues.

It belongs to the NFYB/HAP3 subunit family. Heterotrimeric transcription factor composed of three components, NF-YA, NF-YB and NF-YC. NF-YB and NF-YC must interact and dimerize for NF-YA association and DNA binding. Binds directly with DPB3-1. As to expression, ubiquitous. Predominantly expressed in flowers and siliques.

Its subcellular location is the nucleus. Component of the NF-Y/HAP transcription factor complex. The NF-Y complex stimulates the transcription of various genes by recognizing and binding to a CCAAT motif in promoters. This Arabidopsis thaliana (Mouse-ear cress) protein is Nuclear transcription factor Y subunit B-2.